A 53-amino-acid chain; its full sequence is Mitochondrial sheath formation-associated protein (53 aa).

Mitochondrial intermembrane-facing segments span residues 1–6 and 1–7; these read MIVLGW and MIVLGWM. The next 2 membrane-spanning stretches (helical) occupy residues 7 to 23 and 8 to 24; these read MLFVGLATYMGTFPEAM and LFVGLATYMGTFPEAMP. 2 consecutive stretches face the cytoplasmic side: residues 24 to 53 and 25 to 40; these read PPTLKWKERLPGQENKARRRIQALEEELLL and PTLKWKERLPGQENKA.

In terms of assembly, interacts with VDAC3. In terms of tissue distribution, testis specific. Detected only in germ cells at the step of spermiogenesis (at protein level). Expressed during the middle steps of spermatid development. As to expression, testis specific. Detected only in germ cells at the step of spermiogenesis (at protein level). Expressed in the late steps of spermatid development.

It is found in the mitochondrion outer membrane. In terms of biological role, regulates sperm development. May be involved in mitochondrial sheath formation. This Mus musculus (Mouse) protein is Mitochondrial sheath formation-associated protein.